Here is a 309-residue protein sequence, read N- to C-terminus: Succinoglycan biosynthesis protein ExoM (309 aa).

The protein belongs to the glycosyltransferase 2 family.

It is found in the cell inner membrane. It participates in glycan metabolism; exopolysaccharide biosynthesis. Glycosyltransferase required for the synthesis of succinoglycan (EPS I). Needed for the addition of the fourth sugar (glucose), catalyzes the formation of a beta-1,4 linkage between the third acetylated sugar and the fourth sugar. This Rhizobium meliloti (strain 1021) (Ensifer meliloti) protein is Succinoglycan biosynthesis protein ExoM (exoM).